A 330-amino-acid chain; its full sequence is Tryptophan--tRNA ligase (330 aa).

ATP is bound by residues 10-12 (QAT) and 18-19 (GN). The 'HIGH' region signature appears at 11 to 19 (ATGSLHLGN). Asp134 contributes to the L-tryptophan binding site. ATP contacts are provided by residues 146–148 (GED), Ile186, and 195–199 (KMSKS). The 'KMSKS' region motif lies at 195–199 (KMSKS).

This sequence belongs to the class-I aminoacyl-tRNA synthetase family. Homodimer.

It localises to the cytoplasm. It carries out the reaction tRNA(Trp) + L-tryptophan + ATP = L-tryptophyl-tRNA(Trp) + AMP + diphosphate + H(+). Catalyzes the attachment of tryptophan to tRNA(Trp). This is Tryptophan--tRNA ligase from Rickettsia felis (strain ATCC VR-1525 / URRWXCal2) (Rickettsia azadi).